An 88-amino-acid polypeptide reads, in one-letter code: Apolipoprotein C-I (88 aa).

Positions 1–26 (MRLFISLPILIVVLAMALEGPAPAQA) are cleaved as a signal peptide.

This sequence belongs to the apolipoprotein C1 family.

It is found in the secreted. In terms of biological role, inhibitor of lipoprotein binding to the low density lipoprotein (LDL) receptor, LDL receptor-related protein, and very low density lipoprotein (VLDL) receptor. Associates with high density lipoproteins (HDL) and the triacylglycerol-rich lipoproteins in the plasma and makes up about 10% of the protein of the VLDL and 2% of that of HDL. Appears to interfere directly with fatty acid uptake and is also the major plasma inhibitor of cholesteryl ester transfer protein (CETP). Modulates the interaction of APOE with beta-migrating VLDL and inhibits binding of beta-VLDL to the LDL receptor-related protein. Binds free fatty acids and reduces their intracellular esterification. The polypeptide is Apolipoprotein C-I (Apoc1) (Neotoma lepida (Desert woodrat)).